The chain runs to 413 residues: Gamma-glutamyl phosphate reductase (413 aa).

This sequence belongs to the gamma-glutamyl phosphate reductase family.

The protein resides in the cytoplasm. It carries out the reaction L-glutamate 5-semialdehyde + phosphate + NADP(+) = L-glutamyl 5-phosphate + NADPH + H(+). The protein operates within amino-acid biosynthesis; L-proline biosynthesis; L-glutamate 5-semialdehyde from L-glutamate: step 2/2. Functionally, catalyzes the NADPH-dependent reduction of L-glutamate 5-phosphate into L-glutamate 5-semialdehyde and phosphate. The product spontaneously undergoes cyclization to form 1-pyrroline-5-carboxylate. This Caulobacter vibrioides (strain ATCC 19089 / CIP 103742 / CB 15) (Caulobacter crescentus) protein is Gamma-glutamyl phosphate reductase.